We begin with the raw amino-acid sequence, 1163 residues long: MKLCHAIFSTFVVFFVASGAGEKQGESQLQQIYDELSILSRVTNAIALQAAALSKTVKIREVITELLKVDNGNFSNLLSLDPAHLVKNLDELHKKSLQAVSGSNEQLQQDLKEMIAMNGLLAAVESENYTEKATVNSLIVLKKVDEKMEICDESLITIMFNISQAMSGVPFAESDEMKIFSSMKTMKKAFYKCISKFPAFMQKLYEYNYPLSGFLELNDTMNTIKALNELDIANKIPNMLQKFKTPFLNILAVGDHRNKGNTGKLLQSAITLFKKTVYSNSSTRLFLTAGFPESGDMKRVAKDLTSDWFKKKVSRGKSTAELETALKPFNQFAESMAHVFKSWNNFRDDFQTDSALLATIPDLLSQIDDYDRNVDKKKFLENFEATFRTCFKNYKNALDQGEETKFLKNFSAVYLLVRSVQAVEQWASEISTMFDEKAMDVYFEELEKLTPSNIKEQVEKITNFDDFLKIINKFTMLKSLQTQYESAYKTSNSSELSLSKIITDAGLVDTSKCLEKDKLDSSKLLKMLQFMQHMMQLDIDYSTLKANLDNFFELKKKMLETEKLVKGFTSRSARAASNSGSPVLKIKDSQKHADHLGNGLLAIKKMIISLKEKATILKSTMFNAKANQEIREKNPIDYIKEFWTNPGPSIEKLVSDLEKLEQSSKSYRKADLLTIRKVFEDGSKIVGIPEVFSYIDSQFEKKGSQYSNERKITQALSTLDLNFASHKGALSAASLSVDNLKLYFDDLFGLTPKVSVQSESTSPIVVVLICVAIVLVLVILAIVGYGFTSNGRNQYINLYLYYFGKTSDYEKRWRYSLFMDRVDGKNVLIDSVREINATNLLKAVKRGAYINVCNKYGNTALHVATRRGYQNLVEILIKHGADRSFLNPQNKTAEQMIPVNYQETHKEKIERFKSIESIYNKYRKKKFKLCVPEKFPVSSFHIYIEDRTDDNVTNEFTTKFQSITSDEAMITTTHVVVKTTEDGILETDDLNLLIWIFHGSIIVRDTWMVDCLRDEKLIEKDCDYLVEKVKYKGIIYDTVTQWSNAMAKATTPFLYGVHVALCMKNCPYLASLTAIIQGQGGTMLDKFPDKDAFNKGSHPYLHKNLGPIFLLHDGTGDLDLYRSDPDKMFTLFTEQQFMDLLFKREINKDTNPKIIPVLVDEED.

An ANK repeat occupies 856-885; it reads YGNTALHVATRRGYQNLVEILIKHGADRSF. Positions 929-1025 constitute a BRCT domain; sequence LCVPEKFPVS…KLIEKDCDYL (97 aa).

The polypeptide is Ankyrin repeat-containing protein F37A4.4 (Caenorhabditis elegans).